The primary structure comprises 1199 residues: DNA-directed RNA polymerase subunit beta' (1199 aa).

4 residues coordinate Zn(2+): cysteine 60, cysteine 62, cysteine 75, and cysteine 78. Positions 449, 451, and 453 each coordinate Mg(2+). Zn(2+) contacts are provided by cysteine 818, cysteine 892, cysteine 899, and cysteine 902.

It belongs to the RNA polymerase beta' chain family. As to quaternary structure, the RNAP catalytic core consists of 2 alpha, 1 beta, 1 beta' and 1 omega subunit. When a sigma factor is associated with the core the holoenzyme is formed, which can initiate transcription. The cofactor is Mg(2+). Zn(2+) is required as a cofactor.

The catalysed reaction is RNA(n) + a ribonucleoside 5'-triphosphate = RNA(n+1) + diphosphate. DNA-dependent RNA polymerase catalyzes the transcription of DNA into RNA using the four ribonucleoside triphosphates as substrates. The sequence is that of DNA-directed RNA polymerase subunit beta' from Bacillus licheniformis (strain ATCC 14580 / DSM 13 / JCM 2505 / CCUG 7422 / NBRC 12200 / NCIMB 9375 / NCTC 10341 / NRRL NRS-1264 / Gibson 46).